The sequence spans 73 residues: Translation initiation factor IF-1 1 (73 aa).

The S1-like domain maps to 1-72; it reads MAKEELIEFG…TKGRINFRHK (72 aa).

This sequence belongs to the IF-1 family. Component of the 30S ribosomal translation pre-initiation complex which assembles on the 30S ribosome in the order IF-2 and IF-3, IF-1 and N-formylmethionyl-tRNA(fMet); mRNA recruitment can occur at any time during PIC assembly.

It localises to the cytoplasm. Functionally, one of the essential components for the initiation of protein synthesis. Stabilizes the binding of IF-2 and IF-3 on the 30S subunit to which N-formylmethionyl-tRNA(fMet) subsequently binds. Helps modulate mRNA selection, yielding the 30S pre-initiation complex (PIC). Upon addition of the 50S ribosomal subunit IF-1, IF-2 and IF-3 are released leaving the mature 70S translation initiation complex. This Cupriavidus metallidurans (strain ATCC 43123 / DSM 2839 / NBRC 102507 / CH34) (Ralstonia metallidurans) protein is Translation initiation factor IF-1 1.